The chain runs to 189 residues: GTP cyclohydrolase 1 (189 aa).

Residues C78, H81, and C150 each coordinate Zn(2+).

The protein belongs to the GTP cyclohydrolase I family. In terms of assembly, homomer.

The enzyme catalyses GTP + H2O = 7,8-dihydroneopterin 3'-triphosphate + formate + H(+). It participates in cofactor biosynthesis; 7,8-dihydroneopterin triphosphate biosynthesis; 7,8-dihydroneopterin triphosphate from GTP: step 1/1. The sequence is that of GTP cyclohydrolase 1 from Lysinibacillus sphaericus (strain C3-41).